The following is a 260-amino-acid chain: Chlorocatechol 1,2-dioxygenase (260 aa).

Fe cation-binding residues include Tyr130, Tyr164, His188, and His190.

It belongs to the intradiol ring-cleavage dioxygenase family. Fe(3+) is required as a cofactor.

The enzyme catalyses 3-chlorocatechol + O2 = (2E,4Z)-2-chloromuconate + 2 H(+). The catalysed reaction is 3,5-dichlorocatechol + O2 = (2E,4E)-2,4-dichloromuconate + 2 H(+). It participates in aromatic compound metabolism; 3-chlorocatechol degradation. Preferentially converts 3-chlorocatechol and 3,5-dichlorocatechol as opposed to other chlorinated catechols. Retains diminished activity toward non-chlorinated substrates. In Pseudomonas putida (Arthrobacter siderocapsulatus), this protein is Chlorocatechol 1,2-dioxygenase (clcA).